A 250-amino-acid chain; its full sequence is Coproheme decarboxylase (250 aa).

Residues Arg-131, 145-149 (YPMNK), His-172, and Gln-185 contribute to the Fe-coproporphyrin III site. Tyr-145 is an active-site residue.

Belongs to the ChdC family. Type 1 subfamily. Fe-coproporphyrin III is required as a cofactor.

It catalyses the reaction Fe-coproporphyrin III + 2 H2O2 + 2 H(+) = heme b + 2 CO2 + 4 H2O. The enzyme catalyses Fe-coproporphyrin III + H2O2 + H(+) = harderoheme III + CO2 + 2 H2O. The catalysed reaction is harderoheme III + H2O2 + H(+) = heme b + CO2 + 2 H2O. Its pathway is porphyrin-containing compound metabolism; protoheme biosynthesis. Involved in coproporphyrin-dependent heme b biosynthesis. Catalyzes the decarboxylation of Fe-coproporphyrin III (coproheme) to heme b (protoheme IX), the last step of the pathway. The reaction occurs in a stepwise manner with a three-propionate intermediate. This chain is Coproheme decarboxylase, found in Staphylococcus aureus (strain MRSA252).